We begin with the raw amino-acid sequence, 761 residues long: 3'-5' RNA nuclease TATDN2 (761 aa).

Disordered stretches follow at residues 1-90 (MASE…HFLG), 135-181 (CSLK…LRDQ), 197-294 (KSMP…RRTV), 318-337 (KDRE…SDVE), 343-364 (RFSQ…SSFT), and 388-486 (SSPK…PKSH). Composition is skewed to low complexity over residues 33-52 (APSS…PSSP) and 66-85 (SRRL…SSFS). Residues 247-294 (QKEKDATPEVSMEEDKTVPERSSFYDRRVVIDPQEKPSEEPLGDRRTV) are compositionally biased toward basic and acidic residues. Residues 388-402 (SSPKPSSYPSTGSSS) show a composition bias toward low complexity. The segment covering 417-431 (SDYSPNSTGSVQNTS) has biased composition (polar residues). The segment covering 452–470 (RSSEEREVKEKRTFQEEMP) has biased composition (basic and acidic residues). A divalent metal cation contacts are provided by His499, His501, Glu593, His630, His655, and Asp707.

This sequence belongs to the metallo-dependent hydrolases superfamily. TatD-type hydrolase family. It depends on Mg(2+) as a cofactor.

The protein resides in the nucleus. Functionally, mg(2+)-dependent 3'RNA exonuclease and endonuclease that resolves R-loops via specific degradation of R-loop RNA stucture. Shows no activity against D-loop and minimal activity against the RNA strand of an RNA-DNA hybrid duplex oligomer. Has no 3' or 5' exonuclease activity, no uracil glycosylase activity, and no 5' flap endonuclease activity on DNA substrates. May have a role in maintaining genomic stability through its role in R-loop resolution. This Homo sapiens (Human) protein is 3'-5' RNA nuclease TATDN2 (TATDN2).